Here is a 785-residue protein sequence, read N- to C-terminus: uncharacterized protein (785 aa).

Positions Leu293 to Phe421 constitute a DOD-type homing endonuclease domain.

Post-translationally, this protein undergoes a protein self splicing that involves a post-translational excision of the intervening region (intein) followed by peptide ligation.

This is an uncharacterized protein from Methanocaldococcus jannaschii (strain ATCC 43067 / DSM 2661 / JAL-1 / JCM 10045 / NBRC 100440) (Methanococcus jannaschii).